We begin with the raw amino-acid sequence, 530 residues long: Ubiquitin carboxyl-terminal hydrolase 17-like protein 21 (530 aa).

The region spanning 80–375 is the USP domain; sequence AGLQNMGNTC…QAYVLFYIQK (296 aa). Cysteine 89 serves as the catalytic Nucleophile. The Proton acceptor role is filled by histidine 334. Basic and acidic residues-rich tracts occupy residues 382 to 392 and 398 to 412; these read SESVSRGREPR and DTDR…KRDH. 2 disordered regions span residues 382-412 and 477-530; these read SESV…KRDH and NHHP…LVCQ. A compositionally biased stretch (polar residues) spans 493–505; that stretch reads TPTHQESMNTGTL. Residues 510-524 are compositionally biased toward basic residues; the sequence is GRARRSKGKNKHSKR.

Belongs to the peptidase C19 family. USP17 subfamily.

The protein resides in the nucleus. Its subcellular location is the endoplasmic reticulum. The enzyme catalyses Thiol-dependent hydrolysis of ester, thioester, amide, peptide and isopeptide bonds formed by the C-terminal Gly of ubiquitin (a 76-residue protein attached to proteins as an intracellular targeting signal).. In terms of biological role, deubiquitinating enzyme that removes conjugated ubiquitin from specific proteins to regulate different cellular processes that may include cell proliferation, progression through the cell cycle, apoptosis, cell migration, and the cellular response to viral infection. The polypeptide is Ubiquitin carboxyl-terminal hydrolase 17-like protein 21 (USP17L21) (Homo sapiens (Human)).